A 323-amino-acid chain; its full sequence is MSGKPPAIFLMGPTAAGKTDLAIELTTVLPCELISVDSALVYRGMDIGSAKPSKEVLAAHPHRLIDILDPAQSYSAAQFRADALEAMAEITARGKIPLLVGGTMLYYKALIDGLADMPAADATVRAELEAQAEALGLAELHRQLAEVDPESAARIHPNDPQRLIRALEVYRVSGESMTAHRRRQFAESRGADAGAGGHLPYTVASLAIAPTDRHILHQRIALRFSQMLEQGFVDEVRSLRARSDLHAGLPSIRAVGYRQVWDYLDGKLTENEMRERGIIATRQLAKRQFTWLRGWPEVHWLDSLACDNLSRTLKYLGAISILS.

12–19 contributes to the ATP binding site; it reads GPTAAGKT. 14 to 19 is a binding site for substrate; it reads TAAGKT. Interaction with substrate tRNA stretches follow at residues 37–40 and 161–165; these read DSAL and QRLIR.

Belongs to the IPP transferase family. Monomer. Requires Mg(2+) as cofactor.

It carries out the reaction adenosine(37) in tRNA + dimethylallyl diphosphate = N(6)-dimethylallyladenosine(37) in tRNA + diphosphate. Its function is as follows. Catalyzes the transfer of a dimethylallyl group onto the adenine at position 37 in tRNAs that read codons beginning with uridine, leading to the formation of N6-(dimethylallyl)adenosine (i(6)A). The sequence is that of tRNA dimethylallyltransferase from Pseudomonas putida (strain ATCC 47054 / DSM 6125 / CFBP 8728 / NCIMB 11950 / KT2440).